Here is a 1106-residue protein sequence, read N- to C-terminus: Carbamoyl phosphate synthase large chain (1106 aa).

The interval 1–401 (MPKRNDLNKV…AFLKALRSLE (401 aa)) is carboxyphosphate synthetic domain. ATP is bound by residues arginine 129, arginine 169, glycine 175, glycine 176, arginine 208, valine 210, glutamate 215, glycine 241, valine 242, histidine 243, glutamine 284, and glutamate 298. The 195-residue stretch at 133–327 (KTTMNDIGEP…IARVASKIAI (195 aa)) folds into the ATP-grasp 1 domain. Glutamine 284, glutamate 298, and asparagine 300 together coordinate Mg(2+). Mn(2+)-binding residues include glutamine 284, glutamate 298, and asparagine 300. Residues 402-577 (IDLDDLHQSI…YSAYNEENEA (176 aa)) form an oligomerization domain region. A carbamoyl phosphate synthetic domain region spans residues 578–964 (IPPSEPTHDK…ALYKAMLASG (387 aa)). The ATP-grasp 2 domain occupies 706–896 (DQLLNKLGID…MVKIATKAMM (191 aa)). Residues arginine 742, glutamine 781, leucine 783, glutamate 787, glycine 812, valine 813, histidine 814, serine 815, glutamine 855, and glutamate 867 each contribute to the ATP site. Glutamine 855, glutamate 867, and asparagine 869 together coordinate Mg(2+). Mn(2+) is bound by residues glutamine 855, glutamate 867, and asparagine 869. Positions 965–1106 (FSINLNGGVL…LQDYLKELSN (142 aa)) constitute an MGS-like domain. Residues 965 to 1106 (FSINLNGGVL…LQDYLKELSN (142 aa)) are allosteric domain.

It belongs to the CarB family. Composed of two chains; the small (or glutamine) chain promotes the hydrolysis of glutamine to ammonia, which is used by the large (or ammonia) chain to synthesize carbamoyl phosphate. Tetramer of heterodimers (alpha,beta)4. Mg(2+) is required as a cofactor. The cofactor is Mn(2+).

It carries out the reaction hydrogencarbonate + L-glutamine + 2 ATP + H2O = carbamoyl phosphate + L-glutamate + 2 ADP + phosphate + 2 H(+). The catalysed reaction is hydrogencarbonate + NH4(+) + 2 ATP = carbamoyl phosphate + 2 ADP + phosphate + 2 H(+). It functions in the pathway amino-acid biosynthesis; L-arginine biosynthesis; carbamoyl phosphate from bicarbonate: step 1/1. The protein operates within pyrimidine metabolism; UMP biosynthesis via de novo pathway; (S)-dihydroorotate from bicarbonate: step 1/3. Large subunit of the glutamine-dependent carbamoyl phosphate synthetase (CPSase). CPSase catalyzes the formation of carbamoyl phosphate from the ammonia moiety of glutamine, carbonate, and phosphate donated by ATP, constituting the first step of 2 biosynthetic pathways, one leading to arginine and/or urea and the other to pyrimidine nucleotides. The large subunit (synthetase) binds the substrates ammonia (free or transferred from glutamine from the small subunit), hydrogencarbonate and ATP and carries out an ATP-coupled ligase reaction, activating hydrogencarbonate by forming carboxy phosphate which reacts with ammonia to form carbamoyl phosphate. The sequence is that of Carbamoyl phosphate synthase large chain from Natranaerobius thermophilus (strain ATCC BAA-1301 / DSM 18059 / JW/NM-WN-LF).